The following is a 158-amino-acid chain: SsrA-binding protein (158 aa).

Residues 131–158 are disordered; it reads GKKTHDKRETEKKRDWNREKARLLRDRG. Basic and acidic residues predominate over residues 136 to 158; sequence DKRETEKKRDWNREKARLLRDRG.

The protein belongs to the SmpB family.

Its subcellular location is the cytoplasm. Required for rescue of stalled ribosomes mediated by trans-translation. Binds to transfer-messenger RNA (tmRNA), required for stable association of tmRNA with ribosomes. tmRNA and SmpB together mimic tRNA shape, replacing the anticodon stem-loop with SmpB. tmRNA is encoded by the ssrA gene; the 2 termini fold to resemble tRNA(Ala) and it encodes a 'tag peptide', a short internal open reading frame. During trans-translation Ala-aminoacylated tmRNA acts like a tRNA, entering the A-site of stalled ribosomes, displacing the stalled mRNA. The ribosome then switches to translate the ORF on the tmRNA; the nascent peptide is terminated with the 'tag peptide' encoded by the tmRNA and targeted for degradation. The ribosome is freed to recommence translation, which seems to be the essential function of trans-translation. The chain is SsrA-binding protein from Brucella abortus biovar 1 (strain 9-941).